Consider the following 142-residue polypeptide: Large ribosomal subunit protein uL13 (142 aa).

Belongs to the universal ribosomal protein uL13 family. In terms of assembly, part of the 50S ribosomal subunit.

In terms of biological role, this protein is one of the early assembly proteins of the 50S ribosomal subunit, although it is not seen to bind rRNA by itself. It is important during the early stages of 50S assembly. In Bordetella avium (strain 197N), this protein is Large ribosomal subunit protein uL13.